The chain runs to 940 residues: Valine--tRNA ligase (940 aa).

Residues 47-57 (PNVTGILHMGH) carry the 'HIGH' region motif. Positions 564-568 (KLSKS) match the 'KMSKS' region motif. Position 567 (Lys-567) interacts with ATP. Residues 872–938 (PMEHITKERN…LQSILDKLAS (67 aa)) adopt a coiled-coil conformation.

Belongs to the class-I aminoacyl-tRNA synthetase family. ValS type 1 subfamily. Monomer.

Its subcellular location is the cytoplasm. The enzyme catalyses tRNA(Val) + L-valine + ATP = L-valyl-tRNA(Val) + AMP + diphosphate. In terms of biological role, catalyzes the attachment of valine to tRNA(Val). As ValRS can inadvertently accommodate and process structurally similar amino acids such as threonine, to avoid such errors, it has a 'posttransfer' editing activity that hydrolyzes mischarged Thr-tRNA(Val) in a tRNA-dependent manner. This is Valine--tRNA ligase from Chlamydia caviae (strain ATCC VR-813 / DSM 19441 / 03DC25 / GPIC) (Chlamydophila caviae).